Reading from the N-terminus, the 413-residue chain is Histidine--tRNA ligase (413 aa).

It belongs to the class-II aminoacyl-tRNA synthetase family. In terms of assembly, homodimer.

It is found in the cytoplasm. It carries out the reaction tRNA(His) + L-histidine + ATP = L-histidyl-tRNA(His) + AMP + diphosphate + H(+). The protein is Histidine--tRNA ligase of Geobacter metallireducens (strain ATCC 53774 / DSM 7210 / GS-15).